Here is a 722-residue protein sequence, read N- to C-terminus: Methionine--tRNA ligase (722 aa).

A 'HIGH' region motif is present at residues P11–H21. Residues C143, C146, C156, and C159 each contribute to the Zn(2+) site. The 'KMSKS' region signature appears at K344–S348. T347 provides a ligand contact to ATP. The tRNA-binding domain maps to D622–R722.

Belongs to the class-I aminoacyl-tRNA synthetase family. MetG type 1 subfamily. In terms of assembly, homodimer. Zn(2+) is required as a cofactor.

It localises to the cytoplasm. The catalysed reaction is tRNA(Met) + L-methionine + ATP = L-methionyl-tRNA(Met) + AMP + diphosphate. In terms of biological role, is required not only for elongation of protein synthesis but also for the initiation of all mRNA translation through initiator tRNA(fMet) aminoacylation. In Pyrococcus abyssi (strain GE5 / Orsay), this protein is Methionine--tRNA ligase.